The chain runs to 160 residues: Transmembrane protein 216 (160 aa).

A run of 4 helical transmembrane segments spans residues 41–61 (WYFA…GVIL), 68–88 (LILD…RLFY), 101–121 (LFVS…YLLL), and 134–154 (AVLL…ISIF).

As to quaternary structure, part of the tectonic-like complex (also named B9 complex).

It is found in the membrane. It localises to the cytoplasm. The protein resides in the cytoskeleton. The protein localises to the cilium basal body. In terms of biological role, part of the tectonic-like complex which is required for tissue-specific ciliogenesis and may regulate ciliary membrane composition. The protein is Transmembrane protein 216 (tmem216) of Danio rerio (Zebrafish).